Consider the following 969-residue polypeptide: RNA polymerase-associated protein RapA (969 aa).

In terms of domain architecture, Helicase ATP-binding spans 162–339 (EVGQRVAPRV…FARLALLDAD (178 aa)). 175 to 182 (DEVGLGKT) contacts ATP. The short motif at 285–288 (DEAH) is the DEAH box element. In terms of domain architecture, Helicase C-terminal spans 492–663 (RIEWLITFLK…GFLKNPQAVG (172 aa)).

It belongs to the SNF2/RAD54 helicase family. RapA subfamily. In terms of assembly, interacts with the RNAP. Has a higher affinity for the core RNAP than for the holoenzyme. Its ATPase activity is stimulated by binding to RNAP.

Its function is as follows. Transcription regulator that activates transcription by stimulating RNA polymerase (RNAP) recycling in case of stress conditions such as supercoiled DNA or high salt concentrations. Probably acts by releasing the RNAP, when it is trapped or immobilized on tightly supercoiled DNA. Does not activate transcription on linear DNA. Probably not involved in DNA repair. The chain is RNA polymerase-associated protein RapA from Actinobacillus pleuropneumoniae serotype 5b (strain L20).